A 137-amino-acid polypeptide reads, in one-letter code: MPTISQLIRKRRVDKIVKTKAPALSYGFNNLKNKVQKYKSPQKSGVCIRVTTMTPKKPNSALRKYARVRLSNGTEVNAYIPGIGHTLQEHSVVLIRGGRVKDLPGVRYHIIRGILDAKGVINRKQSRSKYGSKKNKN.

A 3-methylthioaspartic acid modification is found at Asp102.

This sequence belongs to the universal ribosomal protein uS12 family. In terms of assembly, part of the 30S ribosomal subunit. Contacts proteins S8 and S17. May interact with IF1 in the 30S initiation complex.

Functionally, with S4 and S5 plays an important role in translational accuracy. Interacts with and stabilizes bases of the 16S rRNA that are involved in tRNA selection in the A site and with the mRNA backbone. Located at the interface of the 30S and 50S subunits, it traverses the body of the 30S subunit contacting proteins on the other side and probably holding the rRNA structure together. The combined cluster of proteins S8, S12 and S17 appears to hold together the shoulder and platform of the 30S subunit. The chain is Small ribosomal subunit protein uS12 from Phytoplasma mali (strain AT).